The following is a 298-amino-acid chain: Homoserine kinase (298 aa).

83–93 contacts ATP; it reads PISRGLGSSSS.

This sequence belongs to the GHMP kinase family. Homoserine kinase subfamily.

Its subcellular location is the cytoplasm. It catalyses the reaction L-homoserine + ATP = O-phospho-L-homoserine + ADP + H(+). It participates in amino-acid biosynthesis; L-threonine biosynthesis; L-threonine from L-aspartate: step 4/5. Functionally, catalyzes the ATP-dependent phosphorylation of L-homoserine to L-homoserine phosphate. This is Homoserine kinase from Clostridium botulinum (strain Eklund 17B / Type B).